The following is a 237-amino-acid chain: Cuticlin-like protein 19 (237 aa).

An N-terminal signal peptide occupies residues 1 to 20 (MVEYNRIFCVLVIFSTTIKC).

Interacts with vps-51 and vps-52. In terms of tissue distribution, expression detected in motor neurons.

It is found in the golgi apparatus. Its subcellular location is the trans-Golgi network. The chain is Cuticlin-like protein 19 (cutl-19) from Caenorhabditis elegans.